A 258-amino-acid polypeptide reads, in one-letter code: Thiazole synthase (258 aa).

Lysine 100 (schiff-base intermediate with DXP) is an active-site residue. 1-deoxy-D-xylulose 5-phosphate-binding positions include glycine 161, 187 to 188, and 209 to 210; these read AG and NT.

The protein belongs to the ThiG family. In terms of assembly, homotetramer. Forms heterodimers with either ThiH or ThiS.

The protein localises to the cytoplasm. It carries out the reaction [ThiS sulfur-carrier protein]-C-terminal-Gly-aminoethanethioate + 2-iminoacetate + 1-deoxy-D-xylulose 5-phosphate = [ThiS sulfur-carrier protein]-C-terminal Gly-Gly + 2-[(2R,5Z)-2-carboxy-4-methylthiazol-5(2H)-ylidene]ethyl phosphate + 2 H2O + H(+). The protein operates within cofactor biosynthesis; thiamine diphosphate biosynthesis. Catalyzes the rearrangement of 1-deoxy-D-xylulose 5-phosphate (DXP) to produce the thiazole phosphate moiety of thiamine. Sulfur is provided by the thiocarboxylate moiety of the carrier protein ThiS. In vitro, sulfur can be provided by H(2)S. This Campylobacter jejuni (strain RM1221) protein is Thiazole synthase.